The following is a 432-amino-acid chain: D-amino acid dehydrogenase (432 aa).

3 to 17 (VVILGSGVVGVASAW) contacts FAD.

This sequence belongs to the DadA oxidoreductase family. It depends on FAD as a cofactor.

The enzyme catalyses a D-alpha-amino acid + A + H2O = a 2-oxocarboxylate + AH2 + NH4(+). It functions in the pathway amino-acid degradation; D-alanine degradation; NH(3) and pyruvate from D-alanine: step 1/1. Oxidative deamination of D-amino acids. The protein is D-amino acid dehydrogenase of Klebsiella pneumoniae (strain 342).